We begin with the raw amino-acid sequence, 59 residues long: Potassium channel toxin alpha-KTx 15.4 (59 aa).

An N-terminal signal peptide occupies residues 1-22 (MKFSSIILLTLLICSMSIFGNC). Gln23 is modified (pyrrolidone carboxylic acid). Cystine bridges form between Cys30–Cys50, Cys35–Cys55, and Cys39–Cys57.

Expressed by the venom gland.

It is found in the secreted. Functionally, blocker of A-type voltage-gated potassium channels of cerebellar granular cells. May also inhibit Kv4/KCND when coexpressed with DPP6 or DPP10. The occlusion of the outer entry of the K(+) conducting pore is partially reversible and affects both open and closed channels. It shares the same target in rat brain than BmTX3 (AC Q8I0L5) and AmmTX3 (AC P60208). The polypeptide is Potassium channel toxin alpha-KTx 15.4 (Androctonus australis (Sahara scorpion)).